Here is a 331-residue protein sequence, read N- to C-terminus: MARGGRGRRLGLALGLLLALVLAPRVLRAKPTVRKERVVRPDSELGERPPEDNQSFQYDHEAFLGKEDSKTFDQLTPDESKERLGKIVDRIDNDGDGFVTTEELKTWIKRVQKRYIFDNVAKVWKDYDRDKDDKISWEEYKQATYGYYLGNPAEFHDSSDHHTFKKMLPRDERRFKAADLNGDLTATREEFTAFLHPEEFEHMKEIVVLETLEDIDKNGDGFVDQDEYIADMFSHEENGPEPDWVLSEREQFNEFRDLNKDGKLDKDEIRHWILPQDYDHAQAEARHLVYESDKNKDEKLTKEEILENWNMFVGSQATNYGEDLTKNHDEL.

Residues 1 to 29 (MARGGRGRRLGLALGLLLALVLAPRVLRA) form the signal peptide. Asparagine 53 is a glycosylation site (N-linked (GlcNAc...) asparagine). Serine 55 carries the post-translational modification Phosphoserine. A Phosphothreonine modification is found at threonine 76. EF-hand domains are found at residues 79–114 (ESKE…VQKR), 115–150 (YIFD…YYLG), 166–201 (KMLP…EEFE), 203–238 (MKEI…HEEN), 244–279 (WVLS…QDYD), and 280–315 (HAQA…FVGS). A Phosphoserine; by FAM20C modification is found at serine 80. Residues aspartate 92, aspartate 94, aspartate 96, glutamate 103, aspartate 128, aspartate 130, aspartate 132, lysine 134, glutamate 139, aspartate 179, asparagine 181, aspartate 183, threonine 185, glutamate 190, aspartate 216, asparagine 218, aspartate 220, glutamate 227, aspartate 257, asparagine 259, aspartate 261, lysine 263, glutamate 268, aspartate 293, asparagine 295, aspartate 297, lysine 299, and glutamate 304 each coordinate Ca(2+). Positions 328–331 (HDEL) match the Prevents secretion from ER motif.

This sequence belongs to the CREC family. In terms of processing, O-glycosylated. O-mannosylated by POMT1 and POMT2 and elongated by POMGNT1.

It is found in the endoplasmic reticulum lumen. Functionally, may regulate calcium-dependent activities in the endoplasmic reticulum lumen or post-ER compartment. This Homo sapiens (Human) protein is Reticulocalbin-1 (RCN1).